A 317-amino-acid polypeptide reads, in one-letter code: Beta-ketoacyl-[acyl-carrier-protein] synthase III (317 aa).

Residues Cys112 and His244 contribute to the active site. An ACP-binding region spans residues 245 to 249 (QANIR). Asn274 is an active-site residue.

It belongs to the thiolase-like superfamily. FabH family. As to quaternary structure, homodimer.

It is found in the cytoplasm. The enzyme catalyses malonyl-[ACP] + acetyl-CoA + H(+) = 3-oxobutanoyl-[ACP] + CO2 + CoA. It functions in the pathway lipid metabolism; fatty acid biosynthesis. Catalyzes the condensation reaction of fatty acid synthesis by the addition to an acyl acceptor of two carbons from malonyl-ACP. Catalyzes the first condensation reaction which initiates fatty acid synthesis and may therefore play a role in governing the total rate of fatty acid production. Possesses both acetoacetyl-ACP synthase and acetyl transacylase activities. Its substrate specificity determines the biosynthesis of branched-chain and/or straight-chain of fatty acids. The chain is Beta-ketoacyl-[acyl-carrier-protein] synthase III from Rickettsia akari (strain Hartford).